A 367-amino-acid polypeptide reads, in one-letter code: DNA replication and repair protein RecF (367 aa).

30–37 (GNNAQGKT) contacts ATP.

Belongs to the RecF family.

The protein localises to the cytoplasm. Functionally, the RecF protein is involved in DNA metabolism; it is required for DNA replication and normal SOS inducibility. RecF binds preferentially to single-stranded, linear DNA. It also seems to bind ATP. The sequence is that of DNA replication and repair protein RecF from Clostridium tetani (strain Massachusetts / E88).